A 328-amino-acid polypeptide reads, in one-letter code: Probable cell division protein WhiA (328 aa).

Residues 275-308 (SLEELGQLASPPMTKDAVAGRIRRLLSMADKRAE) constitute a DNA-binding region (H-T-H motif).

This sequence belongs to the WhiA family.

Involved in cell division and chromosome segregation. The chain is Probable cell division protein WhiA from Corynebacterium urealyticum (strain ATCC 43042 / DSM 7109).